Consider the following 371-residue polypeptide: Probable beta-1,4-xylosyltransferase GT43A (371 aa).

Topologically, residues 1–19 are cytoplasmic; sequence MGTAAVAAAERPKQRRSSH. Residues 20-42 traverse the membrane as a helical; Signal-anchor for type II membrane protein segment; the sequence is LWKKALLHFSLCFVMGFFTGFAP. Over 43–371 the chain is Lumenal; it reads SSSSSWRAGS…TSTPKTHNRR (329 aa). N-linked (GlcNAc...) asparagine glycans are attached at residues N176 and N299.

This sequence belongs to the glycosyltransferase 43 family.

Its subcellular location is the golgi apparatus membrane. Probable beta-1,4-xylosyltransferase involved in xylan biosynthesis in cell walls. This is Probable beta-1,4-xylosyltransferase GT43A from Oryza sativa subsp. japonica (Rice).